We begin with the raw amino-acid sequence, 742 residues long: UPF0313 protein MA_4618 (742 aa).

The disordered stretch occupies residues 1–125; that stretch reads MGVRKQTMVK…SFSSSLPASK (125 aa). The unknown stretch occupies residues 1–128; that stretch reads MGVRKQTMVK…SSLPASKFLP (128 aa). Basic and acidic residues-rich tracts occupy residues 17 to 40 and 49 to 73; these read ENKKFTREKKDKEKDKKPDRERAG and KKVETGKKGKLGRKSEGKAEEKAEG. The span at 106–115 shows a compositional bias: basic residues; sequence TGKKEKKQKK. Residues 129–742 form a UPF0313 region; that stretch reads MSPEEVKARG…KCLIRRKEKQ (614 aa). The 270-residue stretch at 438–707 folds into the Radical SAM core domain; the sequence is ALEMVKFSLT…AMQRALMHYR (270 aa). Residues Cys452, Cys456, and Cys459 each contribute to the [4Fe-4S] cluster site.

This sequence in the C-terminal section; belongs to the UPF0313 family. [4Fe-4S] cluster is required as a cofactor.

This is UPF0313 protein MA_4618 from Methanosarcina acetivorans (strain ATCC 35395 / DSM 2834 / JCM 12185 / C2A).